A 283-amino-acid polypeptide reads, in one-letter code: Biotin synthase (283 aa).

The Radical SAM core domain maps to 3–232 (KISNEIFLCS…NTRLMIAGGR (230 aa)). Residues cysteine 21, cysteine 25, and cysteine 28 each contribute to the [4Fe-4S] cluster site. [2Fe-2S] cluster-binding residues include cysteine 65, cysteine 100, and arginine 225.

The protein belongs to the radical SAM superfamily. Biotin synthase family. Homodimer. It depends on [4Fe-4S] cluster as a cofactor. Requires [2Fe-2S] cluster as cofactor.

The enzyme catalyses (4R,5S)-dethiobiotin + (sulfur carrier)-SH + 2 reduced [2Fe-2S]-[ferredoxin] + 2 S-adenosyl-L-methionine = (sulfur carrier)-H + biotin + 2 5'-deoxyadenosine + 2 L-methionine + 2 oxidized [2Fe-2S]-[ferredoxin]. It participates in cofactor biosynthesis; biotin biosynthesis; biotin from 7,8-diaminononanoate: step 2/2. Catalyzes the conversion of dethiobiotin (DTB) to biotin by the insertion of a sulfur atom into dethiobiotin via a radical-based mechanism. This is Biotin synthase from Helicobacter hepaticus (strain ATCC 51449 / 3B1).